The following is a 353-amino-acid chain: Probable cytochrome c oxidase subunit 2 (353 aa).

Positions 1–42 are cleaved as a signal peptide; it reads MTARELVCSQRVGQGLSRRLRPLVLAVTLGVLVVTLSGCSWS. 2 helical membrane-spanning segments follow: residues 63–83 and 110–130; these read LWIG…GLIF and LVLT…TVIV. Histidine 246, cysteine 287, cysteine 291, and histidine 295 together coordinate Cu cation.

It belongs to the cytochrome c oxidase subunit 2 family. Requires Cu cation as cofactor. Heme is required as a cofactor.

The protein localises to the cell membrane. It catalyses the reaction 4 Fe(II)-[cytochrome c] + O2 + 8 H(+)(in) = 4 Fe(III)-[cytochrome c] + 2 H2O + 4 H(+)(out). Subunits I and II form the functional core of the enzyme complex. Electrons originating in cytochrome c are transferred via heme a and Cu(A) to the binuclear center formed by heme a3 and Cu(B). This chain is Probable cytochrome c oxidase subunit 2 (ctaC), found in Mycobacterium leprae (strain TN).